The sequence spans 117 residues: Large ribosomal subunit protein uL18 (117 aa).

It belongs to the universal ribosomal protein uL18 family. As to quaternary structure, part of the 50S ribosomal subunit; part of the 5S rRNA/L5/L18/L25 subcomplex. Contacts the 5S and 23S rRNAs.

In terms of biological role, this is one of the proteins that bind and probably mediate the attachment of the 5S RNA into the large ribosomal subunit, where it forms part of the central protuberance. The chain is Large ribosomal subunit protein uL18 from Aliivibrio salmonicida (strain LFI1238) (Vibrio salmonicida (strain LFI1238)).